Consider the following 172-residue polypeptide: Ribosome maturation factor RimM (172 aa).

The 74-residue stretch at 95–168 (AEGEFYYHQI…RVDVEIMEGL (74 aa)) folds into the PRC barrel domain.

Belongs to the RimM family. Binds ribosomal protein uS19.

Its subcellular location is the cytoplasm. Its function is as follows. An accessory protein needed during the final step in the assembly of 30S ribosomal subunit, possibly for assembly of the head region. Essential for efficient processing of 16S rRNA. May be needed both before and after RbfA during the maturation of 16S rRNA. It has affinity for free ribosomal 30S subunits but not for 70S ribosomes. This chain is Ribosome maturation factor RimM, found in Streptococcus equi subsp. zooepidemicus (strain H70).